We begin with the raw amino-acid sequence, 867 residues long: Alanine--tRNA ligase (867 aa).

Residues histidine 554, histidine 558, cysteine 656, and histidine 660 each coordinate Zn(2+).

The protein belongs to the class-II aminoacyl-tRNA synthetase family. The cofactor is Zn(2+).

Its subcellular location is the cytoplasm. The catalysed reaction is tRNA(Ala) + L-alanine + ATP = L-alanyl-tRNA(Ala) + AMP + diphosphate. Its function is as follows. Catalyzes the attachment of alanine to tRNA(Ala) in a two-step reaction: alanine is first activated by ATP to form Ala-AMP and then transferred to the acceptor end of tRNA(Ala). Also edits incorrectly charged Ser-tRNA(Ala) and Gly-tRNA(Ala) via its editing domain. The protein is Alanine--tRNA ligase of Methylococcus capsulatus (strain ATCC 33009 / NCIMB 11132 / Bath).